The chain runs to 244 residues: Biosynthetic peptidoglycan transglycosylase (244 aa).

A helical membrane pass occupies residues 25–45 (LLLLLTAALLYQSWFLLHIVY).

It belongs to the glycosyltransferase 51 family.

It localises to the cell inner membrane. It carries out the reaction [GlcNAc-(1-&gt;4)-Mur2Ac(oyl-L-Ala-gamma-D-Glu-L-Lys-D-Ala-D-Ala)](n)-di-trans,octa-cis-undecaprenyl diphosphate + beta-D-GlcNAc-(1-&gt;4)-Mur2Ac(oyl-L-Ala-gamma-D-Glu-L-Lys-D-Ala-D-Ala)-di-trans,octa-cis-undecaprenyl diphosphate = [GlcNAc-(1-&gt;4)-Mur2Ac(oyl-L-Ala-gamma-D-Glu-L-Lys-D-Ala-D-Ala)](n+1)-di-trans,octa-cis-undecaprenyl diphosphate + di-trans,octa-cis-undecaprenyl diphosphate + H(+). It participates in cell wall biogenesis; peptidoglycan biosynthesis. Its function is as follows. Peptidoglycan polymerase that catalyzes glycan chain elongation from lipid-linked precursors. The protein is Biosynthetic peptidoglycan transglycosylase of Nitrosomonas europaea (strain ATCC 19718 / CIP 103999 / KCTC 2705 / NBRC 14298).